Here is an 892-residue protein sequence, read N- to C-terminus: MAIYYKFKSARDYDTIAMDGPFISVGILKDKIFETKHLGTGKDLDIVVSNAQTNEEYLDEAMLIPKNTSVLIRRVPGRPRITVITTQEPRIQNKVEDVQAETTNFPVADPSAAEFPEDEYDEFGTDLYSIPDTQDAQHIIPRPHLATADDKVDEESKIQALIDTPALDWQQRQGQDTFGAGRGYGRGMPGRMNGRGFGMERKTPPPGYVCHRCNIPGHFIQHCPTNGDPNYDVKRVKPPTGIPKSMLMATPDGSYSLPSGAVAVLKPNEDAFEKEMEGLPSTTRSVGELPPELKCPLCKEVMKDAALTSKCCYKSFCDKCIRDHIISKSMCVCGRSDVLADDLLPNKTLRDTINRILEAGNDSTENVGSVGHIPDLESARCPPPKALSPTTSVASKGEKKPVLSNNNDASTLKAPMEVAEITSAPRASAEVNVEKPVDACESTQGSVIVKEATVSKLNTQAPKEEMQQQVAAGEPGKKKKKKPRVPGNDMQWNPVPDLAGPDYMMQMGPGPQYFNGMQPGFNGVQPGFNGVQPGFNGFHPGFNGFGGPFPGAMPPFMGYGLNPMDMGFGGGMNMMHPDPFMAQGFGFPNIPPPHRDLAEMGNRMNLQRAMMGRDEAEARNAEMLRKRENERRPEGGKMFRDGENSRMMMNNGTSASASSINPNKSRQAPPPPIHDYDRRRRPEKRLSPEHPPTRKNISPSRDSKRKSERYPDERDRQRDRERSRHQDVDREHDRTRDRRDEDRSRDHRHHRGETERSQHHHRKRSEPPSSEPPVPATKAEIENNLKSSVFARISFPEEETSSGKRRKVPSSSSTSVTDPSASASAAAAVGTSVHRHSSRKEIEVADYESSDEDRHFKRKPSRYARSPPVVVSDVSEDKLRYSKRGKGERSRA.

Residues 3–76 (IYYKFKSARD…NTSVLIRRVP (74 aa)) form the DWNN domain. A CCHC-type zinc finger spans residues 210–224 (CHRCNIPGHFIQHCP). At S285 the chain carries Phosphoserine. The segment at 295–333 (CPLCKEVMKDAALTSKCCYKSFCDKCIRDHIISKSMCVC) adopts an RING-type; degenerate zinc-finger fold. 3 disordered regions span residues 375-408 (DLES…NNND), 459-493 (TQAP…MQWN), and 623-892 (MLRK…RSRA). S404 bears the Phosphoserine mark. Basic and acidic residues predominate over residues 623–644 (MLRKRENERRPEGGKMFRDGEN). Positions 647 to 666 (MMMNNGTSASASSINPNKSR) are enriched in polar residues. Residues 674-692 (HDYDRRRRPEKRLSPEHPP) are compositionally biased toward basic and acidic residues. A Nuclear localization signal motif is present at residues 693–700 (TRKNISPS). Residues 708 to 745 (ERYPDERDRQRDRERSRHQDVDREHDRTRDRRDEDRSR) are compositionally biased toward basic and acidic residues. Residues 810 to 832 (SSSSTSVTDPSASASAAAAVGTS) are compositionally biased toward low complexity. The residue at position 866 (S866) is a Phosphoserine. Over residues 875-892 (SEDKLRYSKRGKGERSRA) the composition is skewed to basic and acidic residues.

It localises to the nucleus. The catalysed reaction is S-ubiquitinyl-[E2 ubiquitin-conjugating enzyme]-L-cysteine + [acceptor protein]-L-lysine = [E2 ubiquitin-conjugating enzyme]-L-cysteine + N(6)-ubiquitinyl-[acceptor protein]-L-lysine.. The sequence is that of E3 ubiquitin ligase PQT3-like from Arabidopsis thaliana (Mouse-ear cress).